We begin with the raw amino-acid sequence, 212 residues long: Ion-translocating oxidoreductase complex subunit G (212 aa).

Residues 9 to 29 traverse the membrane as a helical segment; it reads GFLLALFALICTGLVAAVNQQ. Thr176 carries the post-translational modification FMN phosphoryl threonine.

The protein belongs to the RnfG family. In terms of assembly, the complex is composed of six subunits: RnfA, RnfB, RnfC, RnfD, RnfE and RnfG. FMN serves as cofactor.

The protein resides in the cell inner membrane. Its function is as follows. Part of a membrane-bound complex that couples electron transfer with translocation of ions across the membrane. The sequence is that of Ion-translocating oxidoreductase complex subunit G from Shewanella baltica (strain OS223).